Here is a 409-residue protein sequence, read N- to C-terminus: Indian hedgehog protein (409 aa).

An N-terminal signal peptide occupies residues 1 to 23 (MQLPKVVLLLCAAALLLSGAVRG). Cys24 is lipidated: N-palmitoyl cysteine. Residues Glu89, Glu90, Asp95, Thr125, Glu126, Asp129, and Asp131 each coordinate Ca(2+). Residues His140, Asp147, and His182 each contribute to the Zn(2+) site. The Cholesterol glycine ester moiety is linked to residue Gly197.

It belongs to the hedgehog family. In terms of assembly, multimer. As to quaternary structure, interacts with BOC and CDON. Interacts with PTCH1. Interacts with glypican GPC3. Post-translationally, cholesterylation is required for N-product targeting to lipid rafts and multimerization. In terms of processing, the C-terminal domain displays an autoproteolysis activity and a cholesterol transferase activity. Both activities result in the cleavage of the full-length protein and covalent attachment of a cholesterol moiety to the C-terminal of the newly generated N-product. The N-product is the active species in both local and long-range signaling, whereas the C-product is degraded in the endoplasmic reticulum. N-palmitoylation by HHAT of N-product is required for indian hedgehog protein N-product multimerization and full activity. As to expression, expressed in the marginal zone at early gastrulation. At stage 14, expression begins in the neural plate with expression becoming more prominent in the anterodorsal area at neural tube closure. At this stage, also expressed diffusely in the somitic and pre-somitic mesoderm. By the early tadpole (stages 28-30), expression is widespread throughout anterior structures with highest levels in the otic vesicle, the eye, and the branchial arches.

Its subcellular location is the cell membrane. It localises to the endoplasmic reticulum membrane. The protein resides in the golgi apparatus membrane. It is found in the secreted. It catalyses the reaction glycyl-L-cysteinyl-[protein] + cholesterol + H(+) = [protein]-C-terminal glycyl cholesterol ester + N-terminal L-cysteinyl-[protein]. Functionally, signal involved in the early induction and patterning of anterodorsal ectoderm, nervous system and somites. Induces ectopic cement gland formation in embryos. It is involved in the regulation of endochondral skeleton formation, and the development of retinal pigment epithelium (RPE), photoreceptors and periocular tissues. In terms of biological role, the C-terminal part of the indian hedgehog protein precursor displays an autoproteolysis and a cholesterol transferase activity. Both activities result in the cleavage of the full-length protein into two parts followed by the covalent attachment of a cholesterol moiety to the C-terminal of the newly generated N-product. Both activities occur in the endoplasmic reticulum. The dually lipidated indian hedgehog protein N-product is a morphogen which is essential for a variety of patterning events during development. Binds to the patched (PTCH1) receptor, which functions in association with smoothened (SMO), to activate the transcription of target genes. Signal involved in the early induction and patterning of anterodorsal ectoderm, nervous system and somites. Induces ectopic cement gland formation in embryos. In Xenopus laevis (African clawed frog), this protein is Indian hedgehog protein.